The following is a 490-amino-acid chain: Ketol-acid reductoisomerase (NADP(+)) (490 aa).

Residues 18-208 form the KARI N-terminal Rossmann domain; sequence AKCRFMDSSE…GGHKAGVLMS (191 aa). NADP(+) contacts are provided by residues 45–48, arginine 68, arginine 76, serine 78, and 108–110; these read CGAQ and DKQ. The active site involves histidine 132. An NADP(+)-binding site is contributed by glycine 158. KARI C-terminal knotted domains lie at 209–344 and 345–486; these read SFIA…KTPA and GDVE…MADM. The Mg(2+) site is built by aspartate 217, glutamate 221, glutamate 389, and glutamate 393. Position 414 (serine 414) interacts with substrate.

It belongs to the ketol-acid reductoisomerase family. Requires Mg(2+) as cofactor.

It carries out the reaction (2R)-2,3-dihydroxy-3-methylbutanoate + NADP(+) = (2S)-2-acetolactate + NADPH + H(+). The catalysed reaction is (2R,3R)-2,3-dihydroxy-3-methylpentanoate + NADP(+) = (S)-2-ethyl-2-hydroxy-3-oxobutanoate + NADPH + H(+). It participates in amino-acid biosynthesis; L-isoleucine biosynthesis; L-isoleucine from 2-oxobutanoate: step 2/4. It functions in the pathway amino-acid biosynthesis; L-valine biosynthesis; L-valine from pyruvate: step 2/4. Functionally, involved in the biosynthesis of branched-chain amino acids (BCAA). Catalyzes an alkyl-migration followed by a ketol-acid reduction of (S)-2-acetolactate (S2AL) to yield (R)-2,3-dihydroxy-isovalerate. In the isomerase reaction, S2AL is rearranged via a Mg-dependent methyl migration to produce 3-hydroxy-3-methyl-2-ketobutyrate (HMKB). In the reductase reaction, this 2-ketoacid undergoes a metal-dependent reduction by NADPH to yield (R)-2,3-dihydroxy-isovalerate. This chain is Ketol-acid reductoisomerase (NADP(+)), found in Marinomonas sp. (strain MWYL1).